Reading from the N-terminus, the 892-residue chain is Alpha-actinin-1 (892 aa).

M1 carries the N-acetylmethionine modification. Positions 1–247 (MDHYDSQQTN…IMTYVSSFYH (247 aa)) are actin-binding. A Phosphoserine modification is found at S6. Y12 carries the post-translational modification Phosphotyrosine; by FAK1. 2 Calponin-homology (CH) domains span residues 31–135 (KQQR…LRFA) and 144–250 (TSAK…HAFS). Residues K95 and K195 each carry the N6-acetyllysine modification. 4 Spectrin repeats span residues 274–384 (QLME…WLLN), 394–499 (HLAE…ALER), 509–620 (QLYL…ALTE), and 630–733 (RLRK…EVEN). Residues 274–733 (QLMEDYEKLA…IARTINEVEN (460 aa)) are interaction with DDN. S471 carries the post-translational modification Phosphoserine. At K676 the chain carries N6-acetyllysine. Residue S677 is modified to Phosphoserine. 2 EF-hand domains span residues 746–781 (EQMN…LGYD) and 787–822 (QGEA…ETAD). Positions 759, 761, 763, 765, and 770 each coordinate Ca(2+). S890 carries the phosphoserine modification.

It belongs to the alpha-actinin family. Homodimer; antiparallel. Interacts with MYOZ2, TTID and LPP. Interacts with DDN. Interacts with PSD. Interacts with MICALL2. Interacts with DNM2 and CTTN. Interacts with PDLIM1. Interacts with PDLIM2. Interacts with PDLIM4 (via PDZ domain). Interacts with IGSF8.

It is found in the cytoplasm. The protein resides in the cytoskeleton. The protein localises to the myofibril. It localises to the sarcomere. Its subcellular location is the z line. It is found in the cell membrane. The protein resides in the cell junction. The protein localises to the cell projection. It localises to the ruffle. Its function is as follows. F-actin cross-linking protein which is thought to anchor actin to a variety of intracellular structures. Association with IGSF8 regulates the immune synapse formation and is required for efficient T-cell activation. This Bos taurus (Bovine) protein is Alpha-actinin-1 (ACTN1).